Consider the following 640-residue polypeptide: 1-deoxy-D-xylulose-5-phosphate synthase (640 aa).

Residues His78 and 119 to 121 (GHS) each bind thiamine diphosphate. Asp151 lines the Mg(2+) pocket. Thiamine diphosphate-binding positions include 152–153 (GA), Asn180, Tyr289, and Glu371. Asn180 serves as a coordination point for Mg(2+).

Belongs to the transketolase family. DXPS subfamily. In terms of assembly, homodimer. It depends on Mg(2+) as a cofactor. Thiamine diphosphate is required as a cofactor.

The catalysed reaction is D-glyceraldehyde 3-phosphate + pyruvate + H(+) = 1-deoxy-D-xylulose 5-phosphate + CO2. It functions in the pathway metabolic intermediate biosynthesis; 1-deoxy-D-xylulose 5-phosphate biosynthesis; 1-deoxy-D-xylulose 5-phosphate from D-glyceraldehyde 3-phosphate and pyruvate: step 1/1. In terms of biological role, catalyzes the acyloin condensation reaction between C atoms 2 and 3 of pyruvate and glyceraldehyde 3-phosphate to yield 1-deoxy-D-xylulose-5-phosphate (DXP). The chain is 1-deoxy-D-xylulose-5-phosphate synthase from Bartonella quintana (strain Toulouse) (Rochalimaea quintana).